The sequence spans 124 residues: MAAELHVELVAADRQVWSGEATLVVARTTSGDIGVMPGHQPLLGVLESGPVTIRTSDGETVVAAVHGGFISFADNKLSLLAEIAELADEIDAQRAERELERAKAEGDATAERRADVRLRAVSAR.

Belongs to the ATPase epsilon chain family. F-type ATPases have 2 components, CF(1) - the catalytic core - and CF(0) - the membrane proton channel. CF(1) has five subunits: alpha(3), beta(3), gamma(1), delta(1), epsilon(1). CF(0) has three main subunits: a, b and c.

The protein localises to the cell membrane. Produces ATP from ADP in the presence of a proton gradient across the membrane. The polypeptide is ATP synthase epsilon chain (Streptomyces avermitilis (strain ATCC 31267 / DSM 46492 / JCM 5070 / NBRC 14893 / NCIMB 12804 / NRRL 8165 / MA-4680)).